The chain runs to 407 residues: Actinorhodin polyketide putative beta-ketoacyl synthase 2 (407 aa).

Positions Met1–Arg402 constitute a Ketosynthase family 3 (KS3) domain.

This sequence belongs to the thiolase-like superfamily. Beta-ketoacyl-ACP synthases family.

The protein is Actinorhodin polyketide putative beta-ketoacyl synthase 2 of Streptomyces coelicolor (strain ATCC BAA-471 / A3(2) / M145).